The chain runs to 208 residues: Large ribosomal subunit protein bL25 (208 aa).

Positions 185 to 195 are enriched in acidic residues; sequence DLEEETGEAEG. The disordered stretch occupies residues 185 to 208; the sequence is DLEEETGEAEGETAAAPAEEGAES. Residues 196–208 are compositionally biased toward low complexity; that stretch reads ETAAAPAEEGAES.

It belongs to the bacterial ribosomal protein bL25 family. CTC subfamily. As to quaternary structure, part of the 50S ribosomal subunit; part of the 5S rRNA/L5/L18/L25 subcomplex. Contacts the 5S rRNA. Binds to the 5S rRNA independently of L5 and L18.

This is one of the proteins that binds to the 5S RNA in the ribosome where it forms part of the central protuberance. This is Large ribosomal subunit protein bL25 from Rhodococcus opacus (strain B4).